The following is a 48-amino-acid chain: uncharacterized protein (48 aa).

This is an uncharacterized protein from His1 virus (isolate Australia/Victoria) (His1V).